The following is a 427-amino-acid chain: Enolase (427 aa).

Glutamine 163 lines the (2R)-2-phosphoglycerate pocket. Residue glutamate 205 is the Proton donor of the active site. Residues aspartate 242, glutamate 285, and aspartate 312 each coordinate Mg(2+). (2R)-2-phosphoglycerate contacts are provided by lysine 337, arginine 366, serine 367, and lysine 388. Lysine 337 functions as the Proton acceptor in the catalytic mechanism.

It belongs to the enolase family. The cofactor is Mg(2+).

The protein localises to the cytoplasm. Its subcellular location is the secreted. It localises to the cell surface. It catalyses the reaction (2R)-2-phosphoglycerate = phosphoenolpyruvate + H2O. It functions in the pathway carbohydrate degradation; glycolysis; pyruvate from D-glyceraldehyde 3-phosphate: step 4/5. Functionally, catalyzes the reversible conversion of 2-phosphoglycerate (2-PG) into phosphoenolpyruvate (PEP). It is essential for the degradation of carbohydrates via glycolysis. This chain is Enolase, found in Rhodopseudomonas palustris (strain HaA2).